We begin with the raw amino-acid sequence, 479 residues long: MFS-type transporter lnaF (479 aa).

Transmembrane regions (helical) follow at residues 47–67 (WIYLVALALFEIGSLVCGFTP), 71–91 (GLIIGRAITGLGSAGLFSGAI), 104–124 (LLCISVIMCLFGVADVAGPLI), 136–156 (WCFYINLPFGGLTALAIVFLL), 177–197 (LVGLLFLFPAVICLLLVLSWG), 208–228 (IIGLIVGFTALILVFIVVQWW), 250–270 (IFSFCITGAMMAFTYHLPIWF), 283–303 (LMSIPTILGMTICSLLSAVLV), 306–326 (IGFYTPFMYAAPVLSVIGAGL), 344–364 (IPFGIGLGIGLSQPMVVVQAV), and 372–392 (LAIAITAFMESLGGSVAISVA). A glycan (N-linked (GlcNAc...) asparagine) is linked at Asn416. Residues 442–462 (LAITQALYVGVALSSLAIVGA) form a helical membrane-spanning segment.

This sequence belongs to the major facilitator superfamily. TCR/Tet family.

The protein localises to the cell membrane. Its function is as follows. MFS-type transporter; part of the lnb gene cluster that mediates the biosynthesis of diastereomeric piperazines. Lna and lnb clusters encode sets of enzymes that produce overlapping sets of previously undescribed metabolites such as piperazinomycin-like metabolites or morpholine. The lna and lnb biosynthetic pathways appear to be part of a signaling network that controls the formation of sclerotia, a resilient overwintering structure. May be involved in the secretion of the metabolites produced by the lna and lnb clusters. This Aspergillus flavus (strain ATCC 200026 / FGSC A1120 / IAM 13836 / NRRL 3357 / JCM 12722 / SRRC 167) protein is MFS-type transporter lnaF.